The primary structure comprises 341 residues: 4-(gamma-L-glutamylamino)butanoyl-[BtrI acyl-carrier protein] monooxygenase BtrO (341 aa).

It belongs to the bacterial luciferase oxidoreductase family.

It carries out the reaction 4-(gamma-L-glutamylamino)butanoyl-[BtrI ACP] + FMNH2 + O2 = 4-(gamma-L-glutamylamino)-(2S)-2-hydroxybutanoyl-[BtrI ACP] + FMN + H2O + H(+). It participates in antibiotic biosynthesis; butirosin biosynthesis. Its function is as follows. Monooxygenase component of a two-component system involved in the biosynthesis of the side chain of the aminoglycoside antibiotics in the biosynthetic pathway of butirosin. Together with BtrV, mediates hydroxylation of gamma-L-Glu-GABA-S-BtrI. Not able to hydroxylate free substrates, activation by the acyl-carrier protein is mandatory. Octanoyl-S-[BtrI acyl-carrier protein] is also accepted as substrate. The protein is 4-(gamma-L-glutamylamino)butanoyl-[BtrI acyl-carrier protein] monooxygenase BtrO (btrO) of Niallia circulans (Bacillus circulans).